The sequence spans 99 residues: UPF0729 protein CG18508 (99 aa).

Residues 60 to 99 (PGGKKTENVSDDDAEESENPPLNATAMAAETEVDESKKEI) form a disordered region. A compositionally biased stretch (acidic residues) spans 68-77 (VSDDDAEESE). S69 bears the Phosphoserine mark.

Belongs to the UPF0729 family.

This Drosophila melanogaster (Fruit fly) protein is UPF0729 protein CG18508.